The sequence spans 528 residues: Tyrosine--tRNA ligase, cytoplasmic (528 aa).

Tyr-39 is a binding site for L-tyrosine. The 'HIGH' region signature appears at 44-52 (TTGKPHVAY). The L-tyrosine site is built by Tyr-166, Gln-170, Asp-173, and Gln-188. The 'KMSKS' region signature appears at 222–226 (KMSSS). Positions 242–247 (KKKLKK) match the Nuclear localization signal motif. A disordered region spans residues 335-364 (KLSNDAYPGASKQKTVPKGSTKNSGPEEID). The segment covering 346 to 358 (KQKTVPKGSTKNS) has biased composition (polar residues). A tRNA-binding domain is found at 364–468 (DPSLLDLRVG…TGSAPGERIY (105 aa)).

The protein belongs to the class-I aminoacyl-tRNA synthetase family. In terms of assembly, homodimer.

The protein localises to the cytoplasm. The protein resides in the nucleus. The enzyme catalyses tRNA(Tyr) + L-tyrosine + ATP = L-tyrosyl-tRNA(Tyr) + AMP + diphosphate + H(+). Its function is as follows. Catalyzes the attachment of tyrosine to tRNA(Tyr) in a two-step reaction: tyrosine is first activated by ATP to form Tyr-AMP and then transferred to the acceptor end of tRNA(Tyr). In Xenopus tropicalis (Western clawed frog), this protein is Tyrosine--tRNA ligase, cytoplasmic (yars1).